Consider the following 238-residue polypeptide: Pyridoxine 5'-phosphate synthase (238 aa).

Asn7 contacts 3-amino-2-oxopropyl phosphate. 9-10 (DH) is a 1-deoxy-D-xylulose 5-phosphate binding site. Arg18 contacts 3-amino-2-oxopropyl phosphate. The active-site Proton acceptor is His43. Residues Arg45 and His50 each coordinate 1-deoxy-D-xylulose 5-phosphate. The Proton acceptor role is filled by Glu70. Residue Thr100 participates in 1-deoxy-D-xylulose 5-phosphate binding. Catalysis depends on His190, which acts as the Proton donor. 3-amino-2-oxopropyl phosphate-binding positions include Gly191 and 212–213 (GH).

Belongs to the PNP synthase family. Homooctamer; tetramer of dimers.

Its subcellular location is the cytoplasm. The catalysed reaction is 3-amino-2-oxopropyl phosphate + 1-deoxy-D-xylulose 5-phosphate = pyridoxine 5'-phosphate + phosphate + 2 H2O + H(+). Its pathway is cofactor biosynthesis; pyridoxine 5'-phosphate biosynthesis; pyridoxine 5'-phosphate from D-erythrose 4-phosphate: step 5/5. Its function is as follows. Catalyzes the complicated ring closure reaction between the two acyclic compounds 1-deoxy-D-xylulose-5-phosphate (DXP) and 3-amino-2-oxopropyl phosphate (1-amino-acetone-3-phosphate or AAP) to form pyridoxine 5'-phosphate (PNP) and inorganic phosphate. The polypeptide is Pyridoxine 5'-phosphate synthase (Prochlorococcus marinus (strain MIT 9215)).